Here is a 167-residue protein sequence, read N- to C-terminus: uncharacterized protein (167 aa).

It belongs to the A.longa ORF167/ORF288 family.

It localises to the plastid. This is an uncharacterized protein from Euglena longa (Euglenophycean alga).